Consider the following 259-residue polypeptide: Tryptophan synthase alpha chain (259 aa).

Residues E52 and D63 each act as proton acceptor in the active site.

The protein belongs to the TrpA family. In terms of assembly, tetramer of two alpha and two beta chains.

It carries out the reaction (1S,2R)-1-C-(indol-3-yl)glycerol 3-phosphate + L-serine = D-glyceraldehyde 3-phosphate + L-tryptophan + H2O. Its pathway is amino-acid biosynthesis; L-tryptophan biosynthesis; L-tryptophan from chorismate: step 5/5. The alpha subunit is responsible for the aldol cleavage of indoleglycerol phosphate to indole and glyceraldehyde 3-phosphate. In Streptococcus gordonii (strain Challis / ATCC 35105 / BCRC 15272 / CH1 / DL1 / V288), this protein is Tryptophan synthase alpha chain.